The chain runs to 245 residues: ATP synthase subunit a, chloroplastic (245 aa).

Helical transmembrane passes span Thr34–Leu54, Val93–Leu113, Ile132–Ser152, Leu197–Leu217, and Gly218–Gly238.

This sequence belongs to the ATPase A chain family. In terms of assembly, F-type ATPases have 2 components, CF(1) - the catalytic core - and CF(0) - the membrane proton channel. CF(1) has five subunits: alpha(3), beta(3), gamma(1), delta(1), epsilon(1). CF(0) has four main subunits: a, b, b' and c.

The protein localises to the plastid. The protein resides in the chloroplast thylakoid membrane. Key component of the proton channel; it plays a direct role in the translocation of protons across the membrane. This is ATP synthase subunit a, chloroplastic from Bigelowiella natans (Pedinomonas minutissima).